The primary structure comprises 318 residues: DNA primase small subunit PriS (318 aa).

Residues aspartate 95, aspartate 97, and aspartate 224 contribute to the active site.

This sequence belongs to the eukaryotic-type primase small subunit family. As to quaternary structure, heterodimer of a small subunit (PriS) and a large subunit (PriL). Mg(2+) is required as a cofactor. The cofactor is Mn(2+).

Catalytic subunit of DNA primase, an RNA polymerase that catalyzes the synthesis of short RNA molecules used as primers for DNA polymerase during DNA replication. The small subunit contains the primase catalytic core and has DNA synthesis activity on its own. Binding to the large subunit stabilizes and modulates the activity, increasing the rate of DNA synthesis while decreasing the length of the DNA fragments, and conferring RNA synthesis capability. The DNA polymerase activity may enable DNA primase to also catalyze primer extension after primer synthesis. May also play a role in DNA repair. This is DNA primase small subunit PriS from Sulfurisphaera tokodaii (strain DSM 16993 / JCM 10545 / NBRC 100140 / 7) (Sulfolobus tokodaii).